Here is a 76-residue protein sequence, read N- to C-terminus: Bacteriocin uberolysin (76 aa).

A propeptide spanning residues 1–6 (MDILLE) is cleaved from the precursor. The segment at residues 7-76 (LAGYTGIASG…RNLKAQAVIW (70 aa)) is a cross-link (cyclopeptide (Leu-Trp)).

Belongs to the bacteriocin class V family.

It localises to the secreted. Cyclopeptide antibiotic with bacteriolytic activity against most streptococci (except S.rattus and S.mutans), Listeria spp., enterococci and staphylococci. The sequence is that of Bacteriocin uberolysin (ublA) from Streptococcus uberis.